A 226-amino-acid chain; its full sequence is Cobalt transport protein CbiM 1 (226 aa).

Transmembrane regions (helical) follow at residues 6-26 (GFLPVEHAIGWSVASAPVVAY), 43-63 (MLLGVAAAFTFVLSALKMPSV), 75-95 (LGAILFGPSAVAPIGAVVLLF), 107-127 (TLGANIFSMAIVGPFAAAAVF), 135-155 (FPFGVGVFLAASLGDLLTYVT), and 181-201 (VFALTQIPLAISEGLLTVVVM).

It belongs to the CbiM family. As to quaternary structure, forms an energy-coupling factor (ECF) transporter complex composed of an ATP-binding protein (A component, CbiO), a transmembrane protein (T component, CbiQ) and 2 possible substrate-capture proteins (S components, CbiM and CbiN) of unknown stoichimetry.

The protein resides in the cell inner membrane. It participates in cofactor biosynthesis; adenosylcobalamin biosynthesis. In terms of biological role, part of the energy-coupling factor (ECF) transporter complex CbiMNOQ involved in cobalt import. The chain is Cobalt transport protein CbiM 1 (cbim1) from Pelobacter propionicus (strain DSM 2379 / NBRC 103807 / OttBd1).